Reading from the N-terminus, the 442-residue chain is ATP-dependent protease ATPase subunit HslU (442 aa).

Residues I18, 60 to 65 (GVGKTE), D255, E320, and R392 each bind ATP.

The protein belongs to the ClpX chaperone family. HslU subfamily. In terms of assembly, a double ring-shaped homohexamer of HslV is capped on each side by a ring-shaped HslU homohexamer. The assembly of the HslU/HslV complex is dependent on binding of ATP.

Its subcellular location is the cytoplasm. In terms of biological role, ATPase subunit of a proteasome-like degradation complex; this subunit has chaperone activity. The binding of ATP and its subsequent hydrolysis by HslU are essential for unfolding of protein substrates subsequently hydrolyzed by HslV. HslU recognizes the N-terminal part of its protein substrates and unfolds these before they are guided to HslV for hydrolysis. This chain is ATP-dependent protease ATPase subunit HslU, found in Hahella chejuensis (strain KCTC 2396).